A 571-amino-acid chain; its full sequence is Urease subunit alpha (571 aa).

A Urease domain is found at 133–571; that stretch reads GGIDTHVHFV…LPLTQRYFLF (439 aa). The Ni(2+) site is built by histidine 138, histidine 140, and lysine 221. Lysine 221 is subject to N6-carboxylysine. Histidine 223 provides a ligand contact to substrate. Ni(2+) contacts are provided by histidine 250 and histidine 276. Histidine 324 (proton donor) is an active-site residue. Aspartate 364 provides a ligand contact to Ni(2+).

This sequence belongs to the metallo-dependent hydrolases superfamily. Urease alpha subunit family. In terms of assembly, heterotrimer of UreA (gamma), UreB (beta) and UreC (alpha) subunits. Three heterotrimers associate to form the active enzyme. Ni cation is required as a cofactor. Carboxylation allows a single lysine to coordinate two nickel ions.

It localises to the cytoplasm. The enzyme catalyses urea + 2 H2O + H(+) = hydrogencarbonate + 2 NH4(+). The protein operates within nitrogen metabolism; urea degradation; CO(2) and NH(3) from urea (urease route): step 1/1. This Staphylococcus xylosus protein is Urease subunit alpha.